The sequence spans 508 residues: Methionine--tRNA ligase (508 aa).

Positions 12-22 match the 'HIGH' region motif; it reads YYVNDIPHIGH. The 'KMSKS' region motif lies at 295 to 299; the sequence is KISKS. Residue K298 participates in ATP binding.

Belongs to the class-I aminoacyl-tRNA synthetase family. MetG type 2B subfamily. As to quaternary structure, monomer.

The protein resides in the cytoplasm. It catalyses the reaction tRNA(Met) + L-methionine + ATP = L-methionyl-tRNA(Met) + AMP + diphosphate. Functionally, is required not only for elongation of protein synthesis but also for the initiation of all mRNA translation through initiator tRNA(fMet) aminoacylation. In Rickettsia conorii (strain ATCC VR-613 / Malish 7), this protein is Methionine--tRNA ligase.